We begin with the raw amino-acid sequence, 505 residues long: Probable cytochrome P450 28a5 (505 aa).

Cysteine 450 is a binding site for heme.

Belongs to the cytochrome P450 family. Requires heme as cofactor.

It is found in the endoplasmic reticulum membrane. The protein localises to the microsome membrane. Functionally, may be involved in the metabolism of insect hormones and in the breakdown of synthetic insecticides. This chain is Probable cytochrome P450 28a5 (Cyp28a5), found in Drosophila melanogaster (Fruit fly).